The chain runs to 502 residues: ATP synthase subunit alpha (502 aa).

Residue 169–176 participates in ATP binding; the sequence is GDRQTGKT.

The protein belongs to the ATPase alpha/beta chains family. As to quaternary structure, F-type ATPases have 2 components, CF(1) - the catalytic core - and CF(0) - the membrane proton channel. CF(1) has five subunits: alpha(3), beta(3), gamma(1), delta(1), epsilon(1). CF(0) has three main subunits: a(1), b(2) and c(9-12). The alpha and beta chains form an alternating ring which encloses part of the gamma chain. CF(1) is attached to CF(0) by a central stalk formed by the gamma and epsilon chains, while a peripheral stalk is formed by the delta and b chains.

The protein localises to the cell membrane. The catalysed reaction is ATP + H2O + 4 H(+)(in) = ADP + phosphate + 5 H(+)(out). Produces ATP from ADP in the presence of a proton gradient across the membrane. The alpha chain is a regulatory subunit. The polypeptide is ATP synthase subunit alpha (Exiguobacterium sp. (strain ATCC BAA-1283 / AT1b)).